We begin with the raw amino-acid sequence, 91 residues long: Small ribosomal subunit protein uS19 (91 aa).

It belongs to the universal ribosomal protein uS19 family.

Its function is as follows. Protein S19 forms a complex with S13 that binds strongly to the 16S ribosomal RNA. In Cupriavidus taiwanensis (strain DSM 17343 / BCRC 17206 / CCUG 44338 / CIP 107171 / LMG 19424 / R1) (Ralstonia taiwanensis (strain LMG 19424)), this protein is Small ribosomal subunit protein uS19.